Consider the following 369-residue polypeptide: O-methyltransferase 12 (369 aa).

S-adenosyl-L-methionine-binding positions include Gly-181, Asp-204, 229–231 (GDF), Asp-230, Phe-231, and Lys-244. The Proton acceptor role is filled by His-248.

Belongs to the class I-like SAM-binding methyltransferase superfamily. Cation-independent O-methyltransferase family. COMT subfamily.

The enzyme catalyses resorcinol + S-adenosyl-L-methionine = 3-methoxyphenol + S-adenosyl-L-homocysteine + H(+). In terms of biological role, S-adenosyl-L-methionine dependent O-methyltransferase that may be involved in modifying resorcinol ring to synthesize a variant of 4-methyl-5-pentylbenzene-1,3-diol. The polypeptide is O-methyltransferase 12 (omt12) (Dictyostelium discoideum (Social amoeba)).